We begin with the raw amino-acid sequence, 254 residues long: C-X-C motif chemokine 16 (254 aa).

A signal peptide spans 1–29 (MGRDLRPGSRVLLLLLLLLLVYLTQPGNG). Over 30 to 205 (NEGSVTGSCY…AGPTARTSAT (176 aa)) the chain is Extracellular. A chemokine region spans residues 32-107 (GSVTGSCYCG…DLKECGHAYS (76 aa)). 2 cysteine pairs are disulfide-bonded: Cys38–Cys68 and Cys40–Cys82. The disordered stretch occupies residues 146-165 (QSTQRPTLPVGSLSSDKELT). Residue Asn168 is glycosylated (N-linked (GlcNAc...) asparagine). The disordered stretch occupies residues 178-200 (SLAAGPEAGENQKQPEKNAGPTA). A helical transmembrane segment spans residues 206–226 (VPVLCLLAIIFILTAALSYVL). Topologically, residues 227–254 (CKRRRGQSPQSSPDLPVHYIPVAPDSNT) are cytoplasmic. The disordered stretch occupies residues 231-254 (RGQSPQSSPDLPVHYIPVAPDSNT).

Belongs to the intercrine alpha (chemokine CxC) family. Post-translationally, glycosylated. Expressed in T-cell areas. Expressed in spleen, lymph nodes, lung, kidney, small intestine and thymus. Weak expression in heart and liver and no expression in brain and bone marrow.

The protein resides in the cell membrane. It localises to the secreted. Functionally, acts as a scavenger receptor on macrophages, which specifically binds to OxLDL (oxidized low density lipoprotein), suggesting that it may be involved in pathophysiology such as atherogenesis. Induces a strong chemotactic response. Induces calcium mobilization. Binds to CXCR6/Bonzo. This chain is C-X-C motif chemokine 16 (CXCL16), found in Homo sapiens (Human).